The chain runs to 446 residues: Glutamine synthetase (446 aa).

The GS beta-grasp domain occupies 15 to 103 (ENVKFLRLQI…LICDVYYPDG (89 aa)). In terms of domain architecture, GS catalytic spans 110–446 (PRYVLKRQIE…WELDRYLATY (337 aa)). Mg(2+) is bound by residues glutamate 134 and glutamate 136. Residue glutamate 186 coordinates ATP. Residues glutamate 191 and glutamate 198 each coordinate Mg(2+). L-glutamate is bound by residues 242–243 (NG) and glycine 243. Mg(2+) is bound at residue histidine 247. Serine 251 serves as a coordination point for ATP. L-glutamate contacts are provided by arginine 300, glutamate 306, and arginine 318. Residues arginine 318 and arginine 323 each contribute to the ATP site. Residue glutamate 335 coordinates Mg(2+). Residue arginine 337 participates in L-glutamate binding.

The protein belongs to the glutamine synthetase family. Interacts with GCBP (TTHA1554). The cofactor is Mg(2+).

Its subcellular location is the cytoplasm. It carries out the reaction L-glutamate + NH4(+) + ATP = L-glutamine + ADP + phosphate + H(+). Its activity is regulated as follows. Activity increases by approximately two-fold in the presence of GCBP. Functionally, catalyzes the ATP-dependent biosynthesis of glutamine from glutamate and ammonia. This chain is Glutamine synthetase, found in Thermus thermophilus (strain ATCC 27634 / DSM 579 / HB8).